Consider the following 141-residue polypeptide: Small ribosomal subunit protein uS12 (141 aa).

Asp-102 is modified (3-methylthioaspartic acid). The tract at residues 115-141 (GDASGVEKRRQQRSLYGAKRPKKEASK) is disordered.

This sequence belongs to the universal ribosomal protein uS12 family. As to quaternary structure, part of the 30S ribosomal subunit. Contacts proteins S8 and S17. May interact with IF1 in the 30S initiation complex.

Functionally, with S4 and S5 plays an important role in translational accuracy. Its function is as follows. Interacts with and stabilizes bases of the 16S rRNA that are involved in tRNA selection in the A site and with the mRNA backbone. Located at the interface of the 30S and 50S subunits, it traverses the body of the 30S subunit contacting proteins on the other side and probably holding the rRNA structure together. The combined cluster of proteins S8, S12 and S17 appears to hold together the shoulder and platform of the 30S subunit. The polypeptide is Small ribosomal subunit protein uS12 (Ureaplasma parvum serovar 3 (strain ATCC 27815 / 27 / NCTC 11736)).